The following is a 372-amino-acid chain: Alpha-parvin (372 aa).

Low complexity predominate over residues Met1–Val11. Residues Met1–Lys44 form a disordered region. Ala2 is modified (N-acetylalanine). Residues Ser8, Ser14, and Ser19 each carry the phosphoserine modification. Residues Pro21–Lys25 form an interaction with ARHGAP31 region. Ser28 and Ser62 each carry phosphoserine. Calponin-homology (CH) domains are found at residues Gln95 to Arg202 and Asn262 to Arg369. Residues Gly223–Glu372 are required for interaction with TESK1 and ILK.

Belongs to the parvin family. As to quaternary structure, component of the heterotrimeric IPP (ILK-PINCH-PARVIN) complex composed of ILK, LIMS1/PINCH and PARVA; the complex binds to F-actin via the C-terminal tail of LIMS1 and the N-terminal region of PARVA, promoting F-actin filament bundling. Interacts with TGFB1I1. Interacts with ARHGAP31. Interacts with the actin cytoskeleton. Interacts (via C-terminus) with TESK1 (via C-terminus); the interaction inhibits TESK1 kinase activity. Interacts with PXN/PAXILLIN (via LD motif 4). In terms of tissue distribution, widely expressed.

Its subcellular location is the cell junction. It is found in the focal adhesion. The protein resides in the cell membrane. The protein localises to the cytoplasm. It localises to the cytoskeleton. Its subcellular location is the myofibril. It is found in the sarcomere. The protein resides in the z line. Plays a role in sarcomere organization and in smooth muscle cell contraction. Required for normal development of the embryonic cardiovascular system, and for normal septation of the heart outflow tract. Plays a role in sprouting angiogenesis and is required for normal adhesion of vascular smooth muscle cells to endothelial cells during blood vessel development. Plays a role in the reorganization of the actin cytoskeleton, formation of lamellipodia and ciliogenesis. Plays a role in the establishment of cell polarity, cell adhesion, cell spreading, and directed cell migration. Within the IPP (ILK-PINCH-PARVIN) complex, binds to F-actin, promoting F-actin bundling, a process required to generate force for actin cytoskeleton reorganization and subsequent dynamic cell adhesion events such as cell spreading and migration. The chain is Alpha-parvin (Parva) from Rattus norvegicus (Rat).